Consider the following 259-residue polypeptide: Glutamate 5-kinase (259 aa).

Lys18 contacts ATP. The substrate site is built by Ser54, Asp141, and Asn153. Residue 173–174 coordinates ATP; sequence SD.

Belongs to the glutamate 5-kinase family.

Its subcellular location is the cytoplasm. The enzyme catalyses L-glutamate + ATP = L-glutamyl 5-phosphate + ADP. The protein operates within amino-acid biosynthesis; L-proline biosynthesis; L-glutamate 5-semialdehyde from L-glutamate: step 1/2. Its function is as follows. Catalyzes the transfer of a phosphate group to glutamate to form L-glutamate 5-phosphate. In Clavibacter michiganensis subsp. michiganensis (strain NCPPB 382), this protein is Glutamate 5-kinase.